The chain runs to 245 residues: 14-3-3 protein zeta/delta (245 aa).

M1 carries the post-translational modification N-acetylmethionine. K3 bears the N6-acetyllysine mark. Residue S58 is modified to Phosphoserine; by PKA. At K68 the chain carries N6-acetyllysine. S184, S207, and S210 each carry phosphoserine. T232 carries the phosphothreonine; by CK1 modification.

The protein belongs to the 14-3-3 family. Interacts with CDK16 and BSPRY. Interacts with WEE1 (C-terminal). Interacts with SAMSN1. Interacts with MLF1 (phosphorylated form); the interaction retains it in the cytoplasm. Interacts with Thr-phosphorylated ITGB2. Interacts with BCL2L11. Homodimer. Heterodimerizes with YWHAE. Homo- and heterodimerization is inhibited by phosphorylation on Ser-58. Interacts with FOXO4, NOXA1, SSH1 and ARHGEF2. Interacts with Pseudomonas aeruginosa exoS (unphosphorylated form). Interacts with BAX; the interaction occurs in the cytoplasm. Under stress conditions, MAPK8-mediated phosphorylation releases BAX to mitochondria. Interacts with phosphorylated RAF1; the interaction is inhibited when YWHAZ is phosphorylated on Thr-232. Interacts with TP53; the interaction enhances p53 transcriptional activity. The Ser-58 phosphorylated form inhibits this interaction and p53 transcriptional activity. Interacts with ABL1 (phosphorylated form); the interaction retains ABL1 in the cytoplasm. Interacts with PKA-phosphorylated AANAT; the interaction modulates AANAT enzymatic activity by increasing affinity for arylalkylamines and acetyl-CoA and protecting the enzyme from dephosphorylation and proteasomal degradation. It may also prevent thiol-dependent inactivation. Interacts with AKT1; the interaction phosphorylates YWHAZ and modulates dimerization. Interacts with GAB2 and TLK2. Interacts with the 'Thr-369' phosphorylated form of DAPK2. Interacts with PI4KB, TBC1D22A and TBC1D22B. Interacts with ZFP36L1 (via phosphorylated form); this interaction occurs in a p38 MAPK- and AKT-signaling pathways. Interacts with SLITRK1. Interacts with AK5, LDB1, MADD, MARK3, PDE1A and SMARCB1. Interacts with YWHAZ. Interacts with MEFV. Interacts with ADAM22 (via C-terminus). The delta, brain-specific form differs from the zeta form in being phosphorylated. Phosphorylation on Ser-184 by MAPK8; promotes dissociation of BAX and translocation of BAX to mitochondria. Phosphorylation on Thr-232; inhibits binding of RAF1. Phosphorylated on Ser-58 by PKA and protein kinase C delta type catalytic subunit in a sphingosine-dependent fashion. Phosphorylation on Ser-58 by PKA; disrupts homodimerization and heterodimerization with YHAE and TP53. Highly expressed in brain (at protein level).

Its subcellular location is the cytoplasm. It localises to the melanosome. Adapter protein implicated in the regulation of a large spectrum of both general and specialized signaling pathways. Binds to a large number of partners, usually by recognition of a phosphoserine or phosphothreonine motif. Binding generally results in the modulation of the activity of the binding partner. Promotes cytosolic retention and inactivation of TFEB transcription factor by binding to phosphorylated TFEB. Induces ARHGEF7 activity on RAC1 as well as lamellipodia and membrane ruffle formation. In neurons, regulates spine maturation through the modulation of ARHGEF7 activity. This is 14-3-3 protein zeta/delta (YWHAZ) from Ovis aries (Sheep).